We begin with the raw amino-acid sequence, 134 residues long: Aspartate 1-decarboxylase (134 aa).

The active-site Schiff-base intermediate with substrate; via pyruvic acid is Ser-25. Ser-25 is modified (pyruvic acid (Ser)). Residue Thr-57 participates in substrate binding. The active-site Proton donor is Tyr-58. 73 to 75 (GAA) provides a ligand contact to substrate.

Belongs to the PanD family. As to quaternary structure, heterooctamer of four alpha and four beta subunits. It depends on pyruvate as a cofactor. Is synthesized initially as an inactive proenzyme, which is activated by self-cleavage at a specific serine bond to produce a beta-subunit with a hydroxyl group at its C-terminus and an alpha-subunit with a pyruvoyl group at its N-terminus.

It localises to the cytoplasm. It catalyses the reaction L-aspartate + H(+) = beta-alanine + CO2. It functions in the pathway cofactor biosynthesis; (R)-pantothenate biosynthesis; beta-alanine from L-aspartate: step 1/1. In terms of biological role, catalyzes the pyruvoyl-dependent decarboxylation of aspartate to produce beta-alanine. The protein is Aspartate 1-decarboxylase of Sulfurihydrogenibium sp. (strain YO3AOP1).